Reading from the N-terminus, the 257-residue chain is Capsid protein (257 aa).

A Bipartite nuclear localization signal motif is present at residues 3–20 (KRNYDTAFSTPMSNVRRR). The Nuclear localization signal signature appears at 41–55 (KRRRWTNRPMWRKPR). A zinc finger lies at 69–86 (CEGPCKVQSFEAKHDISH). The Nuclear export signal motif lies at 102–123 (ITHRVGKRFCVKSIWVTGKIWM). Positions 201–248 (SKFYRVNNYVVYNHQEAAKYENHTENALLLYMACTHASNPVYATLKIR) match the Bipartite nuclear localization signal motif.

Belongs to the geminiviridae capsid protein family. In terms of assembly, homomultimer. Binds to single-stranded and double-stranded viral DNA. Interacts (via nuclear localization signals) with host importin alpha-1a.

The protein localises to the virion. The protein resides in the host nucleus. Its function is as follows. Encapsidates the viral DNA into characteristic twinned ('geminate') particles. Binds the genomic viral ssDNA and shuttles it into and out of the cell nucleus. The CP of bipartite geminiviruses is not required for cell-to-cell or systemic movement. This Glycine max (Soybean) protein is Capsid protein.